We begin with the raw amino-acid sequence, 218 residues long: Ribose-5-phosphate isomerase A (218 aa).

Substrate-binding positions include 28 to 31 (TGST), 81 to 84 (DGAD), and 94 to 97 (KGGG). Glu103 serves as the catalytic Proton acceptor. Residue Lys121 participates in substrate binding.

The protein belongs to the ribose 5-phosphate isomerase family. Homodimer.

It carries out the reaction aldehydo-D-ribose 5-phosphate = D-ribulose 5-phosphate. It functions in the pathway carbohydrate degradation; pentose phosphate pathway; D-ribose 5-phosphate from D-ribulose 5-phosphate (non-oxidative stage): step 1/1. Its function is as follows. Catalyzes the reversible conversion of ribose-5-phosphate to ribulose 5-phosphate. The sequence is that of Ribose-5-phosphate isomerase A from Vibrio parahaemolyticus serotype O3:K6 (strain RIMD 2210633).